Consider the following 167-residue polypeptide: Crossover junction endodeoxyribonuclease RuvC (167 aa).

Catalysis depends on residues Asp7, Glu67, and Asp140. Positions 7, 67, and 140 each coordinate Mg(2+).

This sequence belongs to the RuvC family. As to quaternary structure, homodimer which binds Holliday junction (HJ) DNA. The HJ becomes 2-fold symmetrical on binding to RuvC with unstacked arms; it has a different conformation from HJ DNA in complex with RuvA. In the full resolvosome a probable DNA-RuvA(4)-RuvB(12)-RuvC(2) complex forms which resolves the HJ. It depends on Mg(2+) as a cofactor.

It localises to the cytoplasm. It carries out the reaction Endonucleolytic cleavage at a junction such as a reciprocal single-stranded crossover between two homologous DNA duplexes (Holliday junction).. Functionally, the RuvA-RuvB-RuvC complex processes Holliday junction (HJ) DNA during genetic recombination and DNA repair. Endonuclease that resolves HJ intermediates. Cleaves cruciform DNA by making single-stranded nicks across the HJ at symmetrical positions within the homologous arms, yielding a 5'-phosphate and a 3'-hydroxyl group; requires a central core of homology in the junction. The consensus cleavage sequence is 5'-(A/T)TT(C/G)-3'. Cleavage occurs on the 3'-side of the TT dinucleotide at the point of strand exchange. HJ branch migration catalyzed by RuvA-RuvB allows RuvC to scan DNA until it finds its consensus sequence, where it cleaves and resolves the cruciform DNA. The chain is Crossover junction endodeoxyribonuclease RuvC from Moorella thermoacetica (strain ATCC 39073 / JCM 9320).